Consider the following 150-residue polypeptide: Large ribosomal subunit protein bL9 (150 aa).

This sequence belongs to the bacterial ribosomal protein bL9 family.

Binds to the 23S rRNA. The polypeptide is Large ribosomal subunit protein bL9 (Polynucleobacter necessarius subsp. necessarius (strain STIR1)).